The primary structure comprises 428 residues: MALSGNCSRYYPREQGSAVPNSFPEVVELNVGGQVYFTRHSTLISIPHSLLWKMFSPKRDTANDLAKDSKGRFFIDRDGFLFRYILDYLRDRQVVLPDHFPEKGRLKREAEYFQLPDLVKLLTPDEIKQSPDEFCHSDFEDASQGSDTRICPPSSLLPADRKWGFITVGYRGSCTLGREGQADAKFRRVPRILVCGRISLAKEVFGETLNESRDPDRAPERYTSRFYLKFKHLERAFDMLSECGFHMVACNSSVTASFINQYTDDKIWSSYTEYVFYREPSRWSPSHCDCCCKNGKGDKEGESGTSCNDLSTSSCDSQSEASSPQETVICGPVTRQTNIQTLDRPIKKGPVQLIQQSEMRRKSDLLRTLTSGSRESNMSSKKKAVKEKLSIEEELEKCIQDFLKIKIPDRFPERKHPWQSELLRKYHL.

In terms of domain architecture, BTB spans 25 to 98; that stretch reads EVVELNVGGQ…LRDRQVVLPD (74 aa). The residue at position 112 (tyrosine 112) is a Phosphotyrosine. Phosphoserine occurs at positions 130, 137, 143, and 146.

In terms of assembly, homopentamer; forms an open pentamer. In contrast to other BTB domain-containing proteins, does not interact with CUL3. Interacts as a tetramer with GABRB1 and GABRB2.

The protein localises to the presynaptic cell membrane. It localises to the postsynaptic cell membrane. Its function is as follows. Auxiliary subunit of GABA-B receptors that determine the pharmacology and kinetics of the receptor response. Increases agonist potency and markedly alter the G-protein signaling of the receptors by accelerating onset and promoting desensitization. The chain is BTB/POZ domain-containing protein KCTD16 (KCTD16) from Homo sapiens (Human).